The sequence spans 103 residues: Glutaredoxin-C11 (103 aa).

The 102-residue stretch at 1 to 102 folds into the Glutaredoxin domain; it reads MERIRDLSSK…QMLKDAKAIW (102 aa). Cysteines 21 and 24 form a disulfide.

The protein belongs to the glutaredoxin family. CC-type subfamily.

It localises to the cytoplasm. Has a glutathione-disulfide oxidoreductase activity in the presence of NADPH and glutathione reductase. Reduces low molecular weight disulfides and proteins. This chain is Glutaredoxin-C11 (GRXC11), found in Arabidopsis thaliana (Mouse-ear cress).